The sequence spans 491 residues: (S)-canadine synthase (491 aa).

Residues 6–26 form a helical membrane-spanning segment; that stretch reads LLVCATVAIVFATTTIIRILF. Cys-434 lines the heme pocket.

This sequence belongs to the cytochrome P450 family. Heme is required as a cofactor. Expressed at low levels in roots.

It localises to the endoplasmic reticulum membrane. The protein resides in the microsome membrane. It catalyses the reaction (S)-tetrahydrocolumbamine + reduced [NADPH--hemoprotein reductase] + O2 = (S)-canadine + oxidized [NADPH--hemoprotein reductase] + 2 H2O + H(+). Functionally, involved in the last but one step of the biosynthesis of berberine, an antimicrobial benzylisoquinoline alkaloid. Converts (S)-tetrahydrocolumbamine (THC) to (S)-tetrahydroberberine (THB) also called (S)-canadine. In Coptis japonica (Japanese goldthread), this protein is (S)-canadine synthase (CYP719A1).